A 1915-amino-acid chain; its full sequence is Protein TIC 214 (1915 aa).

6 helical membrane passes run 18-38 (IINSVVVVGLYYGFLTTFSIG), 64-84 (FITGQLMMFISIYYAPLHLAL), 90-110 (ITVLVLPYLLFHFFWHNHKYF), 126-146 (LNIQCVFLNNLIFPLFNHFIL), 174-194 (VGWLIGHILFMKWVELVLIWI), and 230-250 (IFSILLFITCIYYLGRMPSTL). Disordered stretches follow at residues 260–319 (KMKQ…EIRV) and 1566–1631 (NKNI…GSVL). Residues 267–277 (SEEETDVEIET) are compositionally biased toward acidic residues. A compositionally biased stretch (basic and acidic residues) spans 279–288 (SETKETKEEQ). Residues 304–315 (EKEDPDKIDETE) show a composition bias toward acidic residues. The span at 1587-1601 (KSLELENRNQEEKES) shows a compositional bias: basic and acidic residues. Polar residues predominate over residues 1602–1631 (SSQGDLGSNAQNQGNLGPNAQNQGNLGSVL).

It belongs to the TIC214 family. In terms of assembly, part of the Tic complex.

The protein resides in the plastid. The protein localises to the chloroplast inner membrane. In terms of biological role, involved in protein precursor import into chloroplasts. May be part of an intermediate translocation complex acting as a protein-conducting channel at the inner envelope. The chain is Protein TIC 214 from Platanus occidentalis (Sycamore).